The chain runs to 162 residues: Tegument protein BLRF2 (162 aa).

The stretch at 12–43 (VKAVDMSMEDMAARLARLESENKALKQQVLRG) forms a coiled coil. The interval 118–162 (SMLGAKGQPSPGEGTRPRESNDPNATRRARSRSRGREAKKVQISD) is disordered. Residues 151 to 162 (RGREAKKVQISD) show a composition bias toward basic and acidic residues.

The protein belongs to the herpesviridae BLRF2 family. In terms of assembly, homooligomer; homooligomerizes and binds double-stranded DNA (dsDNA) cooperatively. Interacts with host CGAS.

It localises to the virion tegument. The protein resides in the host cytoplasm. Its function is as follows. Plays a role in the inhibition of host innate immune system by targeting the CGAS enzymatic activity which is the principal cytosolic DNA sensor that detects invading viral DNA. Acts by inhibiting CGAS-DNA phase separation: directly binds double-stranded DNA (dsDNA) in a length dependent but sequence independent manner and is able to form DNA-induced phase separation in infected cells. DNA phase separation of ORF52 mediates disruption of liquid-like droplets in which CGAS is activated, thereby preventing CGAS activity. In Homo sapiens (Human), this protein is Tegument protein BLRF2.